The chain runs to 309 residues: Shugoshin (309 aa).

Positions 42-77 (NLLLKQQVVQCTKTIEKLRNENVALRQKNQELIDGT) form a coiled coil. 2 disordered regions span residues 165–195 (FDNNSSQSTSSIQNAVNGTPRKKQSVGKGRR) and 210–309 (EEAS…NTFF). Residues 167 to 178 (NNSSQSTSSIQN) are compositionally biased toward low complexity. Residues 184-193 (PRKKQSVGKG) show a composition bias toward basic residues.

The protein belongs to the shugoshin family. In terms of tissue distribution, expressed in gonads.

The protein localises to the nucleus. Its subcellular location is the chromosome. It is found in the centromere. In terms of biological role, component of cell cycle checkpoints, which ensures chromosome segregation during meiosis and mitosis. During meiotic prophase, it is involved in the regulation of the synapsis checkpoint, which monitors whether homologous chromosomes have synapsed, and the DNA damage response. Plays a central role in chromosome cohesion during cell division by preventing premature dissociation of cohesin complex after prophase, when most of cohesin complex dissociates from chromosomes arms. The protein is Shugoshin of Caenorhabditis elegans.